The following is a 275-amino-acid chain: Small ribosomal subunit protein uS2 (275 aa).

The segment at 226–275 (AAAPNSASVREEEFSAEAGDEGKGRRAPAKKATEKKADAPAAAPEAPAAE) is disordered. The span at 264–275 (APAAAPEAPAAE) shows a compositional bias: low complexity.

This sequence belongs to the universal ribosomal protein uS2 family.

This is Small ribosomal subunit protein uS2 from Xanthomonas campestris pv. campestris (strain 8004).